A 232-amino-acid chain; its full sequence is MAVISMKQLLEAGVHFGHQTRRWNPKMAPYIFTERNGIYIIDLQKTVRKVDEAYNFIREVATQGKKILFVGTKKQAQDSVKEEAERCGMYYVNQRWLGGMLTNFQTIQKRISRLRELEKMEADGTFEVLPKKEVSKLLHEKEKLERFLGGIKDMKELPGAIFVIDPRKERIAVAEARRLGIPLVGIVDTNCDPDEIDYVIPGNDDAIRAVKLLTAKMADAVLEGNQGQSDAQ.

This sequence belongs to the universal ribosomal protein uS2 family.

The polypeptide is Small ribosomal subunit protein uS2 (Heliobacterium modesticaldum (strain ATCC 51547 / Ice1)).